We begin with the raw amino-acid sequence, 555 residues long: Glypican-6 (555 aa).

The first 23 residues, 1–23 (MPSWIGAVILPLLGLLLSLPAGA), serve as a signal peptide directing secretion. Residues 348 to 357 (PALRSARSAP) show a composition bias toward low complexity. The tract at residues 348 to 376 (PALRSARSAPENFNTRFRPYNPEERPTTA) is disordered. Ser529 is lipidated: GPI-anchor amidated serine. Positions 530–555 (SAAQRGHSLLSWSLTCIVLALQRLCR) are cleaved as a propeptide — removed in mature form.

The protein belongs to the glypican family.

The protein resides in the cell membrane. It localises to the secreted. The protein localises to the extracellular space. Functionally, cell surface proteoglycan that bears heparan sulfate. Putative cell surface coreceptor for growth factors, extracellular matrix proteins, proteases and anti-proteases. Enhances migration and invasion of cancer cells through WNT5A signaling. The protein is Glypican-6 (GPC6) of Pongo abelii (Sumatran orangutan).